We begin with the raw amino-acid sequence, 308 residues long: Lipoyl synthase (308 aa).

7 residues coordinate [4Fe-4S] cluster: Cys-48, Cys-53, Cys-59, Cys-74, Cys-78, Cys-81, and Ser-287. Residues 60–277 (WSRHTATYLA…RSVGEALGLF (218 aa)) enclose the Radical SAM core domain.

Belongs to the radical SAM superfamily. Lipoyl synthase family. Requires [4Fe-4S] cluster as cofactor.

It is found in the cytoplasm. The catalysed reaction is [[Fe-S] cluster scaffold protein carrying a second [4Fe-4S](2+) cluster] + N(6)-octanoyl-L-lysyl-[protein] + 2 oxidized [2Fe-2S]-[ferredoxin] + 2 S-adenosyl-L-methionine + 4 H(+) = [[Fe-S] cluster scaffold protein] + N(6)-[(R)-dihydrolipoyl]-L-lysyl-[protein] + 4 Fe(3+) + 2 hydrogen sulfide + 2 5'-deoxyadenosine + 2 L-methionine + 2 reduced [2Fe-2S]-[ferredoxin]. Its pathway is protein modification; protein lipoylation via endogenous pathway; protein N(6)-(lipoyl)lysine from octanoyl-[acyl-carrier-protein]: step 2/2. Catalyzes the radical-mediated insertion of two sulfur atoms into the C-6 and C-8 positions of the octanoyl moiety bound to the lipoyl domains of lipoate-dependent enzymes, thereby converting the octanoylated domains into lipoylated derivatives. This chain is Lipoyl synthase, found in Chlamydia muridarum (strain MoPn / Nigg).